The sequence spans 25 residues: Caerin-1.17 (25 aa).

Leucine 25 is subject to Leucine amide.

It belongs to the frog skin active peptide (FSAP) family. Caerin subfamily. As to expression, expressed by the skin dorsal glands.

It localises to the secreted. Functionally, caerin-1.17 shows significant activity against Gram-positive organisms, but is less effective against Gram-negative organisms. The protein is Caerin-1.17 of Ranoidea gracilenta (Dainty green tree frog).